A 370-amino-acid polypeptide reads, in one-letter code: MKRVDTIRPRSRAVRLHVRGLGLPDETAIQLWIVDGRISTEPVAGADTVFDGGWILPGLVDAHCHVGLGKHGNVELDEAIAQAETERDVGALLLRDCGSPTDTRGLDDHEDLPRIIRAGRHLARPKRYIAGFAVELEDESQLPAAVAEQARRGDGWVKLVGDWIDRQIGDLAPLWSDDVLKAAIDTAHAQGARVTAHVFSEDALPGLINAGIDCIEHGTGLTDDTIALMLEHGTALVPTLINLENFPGIADAAGRYPTYAAHMRDLYARGYGRVAAAREAGVPVYAGTDAGSTIEHGRIADEVAALQRIGMTAHEALGAACWDARRWLGRPGLDDRASADLLCYAQDPRQGPGVLQHPDLVILRGRTFGP.

It belongs to the metallo-dependent hydrolases superfamily.

This is an uncharacterized protein from Mycobacterium bovis (strain ATCC BAA-935 / AF2122/97).